Reading from the N-terminus, the 829-residue chain is Pre-mRNA-splicing factor syf1 (829 aa).

HAT repeat units follow at residues serine 15 to glutamine 47, glycine 49 to lysine 81, serine 93 to glutamine 125, proline 127 to serine 161, glutamate 163 to alanine 182, glycine 277 to serine 312, aspartate 380 to alanine 418, glycine 420 to arginine 456, alanine 473 to leucine 505, lysine 544 to aspartate 578, isoleucine 581 to glutamate 615, and glycine 689 to glutamine 723. Residues alanine 799–glutamate 829 form a disordered region.

This sequence belongs to the crooked-neck family. As to quaternary structure, associated with the spliceosome.

The protein resides in the nucleus. Involved in pre-mRNA splicing and cell cycle progression. In Neurospora crassa (strain ATCC 24698 / 74-OR23-1A / CBS 708.71 / DSM 1257 / FGSC 987), this protein is Pre-mRNA-splicing factor syf1 (msp-41).